The following is a 396-amino-acid chain: S-adenosylmethionine synthase 2 (396 aa).

Glu13 contacts Mg(2+). His19 is an ATP binding site. Glu47 contributes to the K(+) binding site. Positions 60 and 103 each coordinate L-methionine. Residues 171–173 (DGK), 239–242 (SGRF), Asp250, 256–257 (RK), Ala273, Lys277, and Lys281 each bind ATP. L-methionine is bound at residue Asp250. L-methionine is bound at residue Lys281.

It belongs to the AdoMet synthase family. In terms of assembly, homotetramer. The cofactor is Mn(2+). It depends on Mg(2+) as a cofactor. Co(2+) serves as cofactor. Requires K(+) as cofactor.

It localises to the cytoplasm. The enzyme catalyses L-methionine + ATP + H2O = S-adenosyl-L-methionine + phosphate + diphosphate. It functions in the pathway amino-acid biosynthesis; S-adenosyl-L-methionine biosynthesis; S-adenosyl-L-methionine from L-methionine: step 1/1. Functionally, catalyzes the formation of S-adenosylmethionine from methionine and ATP. The reaction comprises two steps that are both catalyzed by the same enzyme: formation of S-adenosylmethionine (AdoMet) and triphosphate, and subsequent hydrolysis of the triphosphate. The polypeptide is S-adenosylmethionine synthase 2 (SAM2) (Dianthus caryophyllus (Carnation)).